The sequence spans 273 residues: Petrobactin import ATP-binding protein FpuD (273 aa).

In terms of domain architecture, ABC transporter spans 5-241; that stretch reads LETKRLTLSY…KLVRDVFRME (237 aa). 37–44 contributes to the ATP binding site; that stretch reads GSNGCGKS.

Belongs to the ABC transporter superfamily. As to quaternary structure, the complex is composed of two ATP-binding proteins (FpuD), two transmembrane proteins (FpuB) and a solute-binding protein (FpuA).

Its subcellular location is the cell membrane. The enzyme catalyses a Fe(III)-siderophore(out) + ATP + H2O = a Fe(III)-siderophore(in) + ADP + phosphate + H(+). Part of an ABC transporter complex involved in ferric-petrobactin uptake. Probably responsible for energy coupling to the transport system. In Bacillus anthracis, this protein is Petrobactin import ATP-binding protein FpuD.